The primary structure comprises 230 residues: Probable thioesterase YBR096W (230 aa).

Belongs to the lcsJ thioesterase family.

The polypeptide is Probable thioesterase YBR096W (Saccharomyces cerevisiae (strain ATCC 204508 / S288c) (Baker's yeast)).